The following is a 270-amino-acid chain: NAD kinase (270 aa).

Asp57 acts as the Proton acceptor in catalysis. Residues 57–58 (DG), 125–126 (NE), Arg150, and Asn227 contribute to the NAD(+) site.

It belongs to the NAD kinase family. It depends on a divalent metal cation as a cofactor.

The protein resides in the cytoplasm. It catalyses the reaction NAD(+) + ATP = ADP + NADP(+) + H(+). Involved in the regulation of the intracellular balance of NAD and NADP, and is a key enzyme in the biosynthesis of NADP. Catalyzes specifically the phosphorylation on 2'-hydroxyl of the adenosine moiety of NAD to yield NADP. The protein is NAD kinase of Ureaplasma parvum serovar 3 (strain ATCC 700970).